A 431-amino-acid polypeptide reads, in one-letter code: FAD-dependent monooxygenase nodY1 (431 aa).

An N-terminal signal peptide occupies residues 1-21; sequence MASTGVSVIVVGLGLAGLTTA. FAD is bound by residues Glu-35 and Arg-110. Residue Arg-188 is part of the active site. Position 313 (Asp-313) interacts with FAD.

Belongs to the paxM FAD-dependent monooxygenase family. FAD is required as a cofactor.

It functions in the pathway secondary metabolite biosynthesis. In terms of biological role, FAD-dependent monooxygenase; part of the gene cluster that mediates the biosynthesis of the indole diterpenes nodulisporic acids (NA). Nodulisporic acid A (NAA) and its chemically modified derivatives are of particular significance because of their highly potent insecticidal activity against blood-feeding arthropods and lack of observable adverse effects on mammals, in particular the tremogenicity associated with the paspaline-derived IDTs is not observed. The geranylgeranyl diphosphate (GGPP) synthase ggs1, localized outside of the cluster, is proposed to catalyze the first step in nodulisporic acid biosynthesis via conversion of farnesyl pyrophosphate and isopentyl pyrophosphate into geranylgeranyl pyrophosphate (GGPP). Condensation of indole-3-glycerol phosphate with GGPP by the prenyl transferase nodC then forms 3-geranylgeranylindole (3-GGI). Epoxidation by the FAD-dependent monooxygenase nodM leads to a single-epoxidized-GGI that is substrate of the terpene cyclase nodB for cyclization to yield emindole SB. The terminal methyl carbon, C28, of emindole SB is then oxidized by the cytochrome P450 monooxygenase nodW to produce nodulisporic acid F (NAF), the pentacyclic core of NAA. NAF is converted to nodulisporic acid E (NAE) via prenylation. This step is probably performed by one of the indole diterpene prenyltransferases nodD1 or nodD2. Several oxidation steps performed by the FAD-linked oxidoreductase nodO and one of the cytochrome P450 monooxygenase nodR, nodX or nodZ further convert NAE to nodulisporic acid D (NAD). NAD is substrate of cytochrome P450 monooxygenase nodJ to produce the precursor of nodulisporic acid C (NAC), converted to NAC by one of the indole diterpene prenyltransferases nodD1 or nodD2. The FAD-dependent monooxygenase nodY2 then oxidizes NAC to nodulisporic acid B (NAB). Finally NAB is converted to NAA by one of the cytochrome P450 monooxygenases nodR, nodX or nodZ. In Hypoxylon pulicicidum, this protein is FAD-dependent monooxygenase nodY1.